The primary structure comprises 1921 residues: Mediator of RNA polymerase II transcription subunit 13 (1921 aa).

Residues K220 and K226 each participate in a glycyl lysine isopeptide (Lys-Gly) (interchain with G-Cter in ubiquitin) cross-link. Disordered regions lie at residues Y400–T434, T702–T724, and S1485–S1528. The span at S407–G427 shows a compositional bias: low complexity. 2 stretches are compositionally biased toward polar residues: residues P1486–S1496 and E1515–V1527.

It belongs to the Mediator complex subunit 13 family. Component of the Mediator complex. Interacts with CYCC1-2 (CDK8 homolog). Ubiquitous. Highest expression in the shoot apex.

The protein localises to the nucleus. Component of the Mediator complex, a coactivator involved in the regulated transcription of nearly all RNA polymerase II-dependent genes. Mediator functions as a bridge to convey information from gene-specific regulatory proteins to the basal RNA polymerase II transcription machinery. The Mediator complex, having a compact conformation in its free form, is recruited to promoters by direct interactions with regulatory proteins and serves for the assembly of a functional preinitiation complex with RNA polymerase II and the general transcription factors. Acts closely together with MAB12. Involved in the regulation of embryo patterning and cotyledon organogenesis. May act through transient repression of specific genes such as the ones responsive to auxin. The protein is Mediator of RNA polymerase II transcription subunit 13 (MED13) of Arabidopsis thaliana (Mouse-ear cress).